A 149-amino-acid polypeptide reads, in one-letter code: Oligosaccharyltransferase complex subunit ostc (149 aa).

At 1–32 (METLFSLPFTVLECPNVKLKKPSWLHMPSAMT) the chain is on the cytoplasmic side. Residues 33 to 53 (VYAVVIVSYFLITGGIIYDVI) form a helical membrane-spanning segment. The Extracellular portion of the chain corresponds to 54 to 83 (VEPPSVGSMTDEHGHQRPVAFLAYRVNGQY). A helical transmembrane segment spans residues 84–104 (IMEGLASSFLFTMGGLGFIIL). Residues 105-117 (DRSNAPNIPKLNR) lie on the Cytoplasmic side of the membrane. The chain crosses the membrane as a helical span at residues 118–138 (FLLLFIGFVSVLLSFFMARVF). The Extracellular segment spans residues 139-149 (MRMKLPGYLMG).

The protein belongs to the OSTC family. As to quaternary structure, specific component of the STT3A-containing form of the oligosaccharyltransferase (OST) complex.

The protein resides in the membrane. The protein operates within protein modification; protein glycosylation. Its function is as follows. Specific component of the STT3A-containing form of the oligosaccharyl transferase (OST) complex that catalyzes the initial transfer of a defined glycan (Glc(3)Man(9)GlcNAc(2) in eukaryotes) from the lipid carrier dolichol-pyrophosphate to an asparagine residue within an Asn-X-Ser/Thr consensus motif in nascent polypeptide chains, the first step in protein N-glycosylation. N-glycosylation occurs cotranslationally and the complex associates with the Sec61 complex at the channel-forming translocon complex that mediates protein translocation across the endoplasmic reticulum (ER). All subunits are required for a maximal enzyme activity. The chain is Oligosaccharyltransferase complex subunit ostc from Danio rerio (Zebrafish).